The chain runs to 317 residues: Adenine deaminase (317 aa).

Zn(2+)-binding residues include histidine 14, histidine 16, and histidine 194. Glutamate 197 serves as the catalytic Proton donor. A Zn(2+)-binding site is contributed by aspartate 275. Position 276 (aspartate 276) interacts with substrate.

This sequence belongs to the metallo-dependent hydrolases superfamily. Adenosine and AMP deaminases family. Adenine deaminase type 2 subfamily. Zn(2+) is required as a cofactor.

The catalysed reaction is adenine + H2O + H(+) = hypoxanthine + NH4(+). Catalyzes the hydrolytic deamination of adenine to hypoxanthine. Plays an important role in the purine salvage pathway and in nitrogen catabolism. The sequence is that of Adenine deaminase from Pseudomonas syringae pv. tomato (strain ATCC BAA-871 / DC3000).